A 294-amino-acid polypeptide reads, in one-letter code: Indole-3-glycerol phosphate synthase (294 aa).

The protein belongs to the TrpC family.

It carries out the reaction 1-(2-carboxyphenylamino)-1-deoxy-D-ribulose 5-phosphate + H(+) = (1S,2R)-1-C-(indol-3-yl)glycerol 3-phosphate + CO2 + H2O. It functions in the pathway amino-acid biosynthesis; L-tryptophan biosynthesis; L-tryptophan from chorismate: step 4/5. This chain is Indole-3-glycerol phosphate synthase, found in Crocosphaera subtropica (strain ATCC 51142 / BH68) (Cyanothece sp. (strain ATCC 51142)).